Here is a 499-residue protein sequence, read N- to C-terminus: Chitinase B (499 aa).

The signal sequence occupies residues 1 to 41; that stretch reads MSTRKAVIGYYFIPTNQINNYTETDTSVVPFPVSNITPAKA. One can recognise a GH18 domain in the interval 42–425; that stretch reads KQLTHINFSF…AALDRYFNAA (384 aa). Chitin-binding positions include 68–69 and 95–98; these read DA and GGWY. Glu-144 serves as the catalytic Proton donor. Chitin is bound by residues Tyr-145, 212–215, and Trp-403; that span reads MTYD. The Chitin-binding type-3 domain maps to 438–498; that stretch reads LRYTGVGPGN…DSAWLKVGRL (61 aa).

The protein belongs to the glycosyl hydrolase 18 family. Chitinase class II subfamily.

It catalyses the reaction Random endo-hydrolysis of N-acetyl-beta-D-glucosaminide (1-&gt;4)-beta-linkages in chitin and chitodextrins.. The protein is Chitinase B (chiB) of Serratia marcescens.